Here is a 166-residue protein sequence, read N- to C-terminus: Olee1-like protein (166 aa).

A signal peptide spans 1-23 (MAKSIIIQAPALCFLSLLGFAYS). 3 disulfide bridges follow: Cys35–Cys106, Cys38–Cys150, and Cys59–Cys94.

It belongs to the Ole e I family.

The protein localises to the secreted. The sequence is that of Olee1-like protein from Betula pendula (European white birch).